The sequence spans 317 residues: Universal stress protein Mb2019 (317 aa).

Residues glycine 13, 128 to 134, 142 to 143, glycine 175, aspartate 208, 277 to 283, and 291 to 293 each bind ATP; these read GYRGQGA, SV, GSHGRGG, and SVS.

This sequence belongs to the universal stress protein A family.

The chain is Universal stress protein Mb2019 from Mycobacterium bovis (strain ATCC BAA-935 / AF2122/97).